A 369-amino-acid chain; its full sequence is Anhydro-N-acetylmuramic acid kinase (369 aa).

12 to 19 (GTSMDGVD) lines the ATP pocket.

Belongs to the anhydro-N-acetylmuramic acid kinase family.

The catalysed reaction is 1,6-anhydro-N-acetyl-beta-muramate + ATP + H2O = N-acetyl-D-muramate 6-phosphate + ADP + H(+). The protein operates within amino-sugar metabolism; 1,6-anhydro-N-acetylmuramate degradation. It functions in the pathway cell wall biogenesis; peptidoglycan recycling. Functionally, catalyzes the specific phosphorylation of 1,6-anhydro-N-acetylmuramic acid (anhMurNAc) with the simultaneous cleavage of the 1,6-anhydro ring, generating MurNAc-6-P. Is required for the utilization of anhMurNAc either imported from the medium or derived from its own cell wall murein, and thus plays a role in cell wall recycling. The sequence is that of Anhydro-N-acetylmuramic acid kinase from Shewanella woodyi (strain ATCC 51908 / MS32).